Reading from the N-terminus, the 5073-residue chain is Malformin synthetase mlfA (5073 aa).

The segment at 194–585 (ERHATNRPHS…CGRADTQVKL (392 aa)) is adenylation 1. The Carrier 1 domain occupies 726–799 (SRLEQEVQLA…EAASLAEVQE (74 aa)). Position 760 is an O-(pantetheine 4'-phosphoryl)serine (Ser760). The tract at residues 837-1268 (EDVFPCTTMQ…ALNTLSLLQA (432 aa)) is condensation 1. The tract at residues 1296–1685 (DRWVTRHPEG…GRKDTQVKLR (390 aa)) is adenylation 2. Positions 1823-1900 (TPASELERTL…QLAAEVGEPA (78 aa)) constitute a Carrier 2 domain. Ser1860 bears the O-(pantetheine 4'-phosphoryl)serine mark. Disordered stretches follow at residues 1901-1930 (GQSA…DGVD) and 1963-1984 (GGSS…SSSK). Low complexity-rich tracts occupy residues 1903 to 1927 (SASS…STND) and 1965 to 1982 (SSSN…SSSS). The tract at residues 2031 to 2446 (EDIYPATALQ…AVSCSDTETL (416 aa)) is condensation 2. The interval 2469–2861 (SRTPHAPAVC…IGRRDGQLKL (393 aa)) is adenylation 3. The Carrier 3 domain maps to 2997-3073 (RPKTSQEQEM…QLICHLNSIR (77 aa)). An O-(pantetheine 4'-phosphoryl)serine modification is found at Ser3034. 2 condensation regions span residues 3090-3555 (WVAL…TYDQ) and 3576-3995 (DIYP…EQLV). The interval 4020–4410 (HASRQAVCAW…VGRKDNQIKF (391 aa)) is adenylation 4. The 77-residue stretch at 4544 to 4620 (MPSTAAERKM…DLGDQARSPN (77 aa)) folds into the Carrier 4 domain. Ser4581 carries the post-translational modification O-(pantetheine 4'-phosphoryl)serine. Residues 4611–4633 (DLGDQARSPNADNQRVSTASSAG) are disordered. Over residues 4617–4631 (RSPNADNQRVSTASS) the composition is skewed to polar residues. Residues 4657–4991 (DVLPTTSFQR…LQTIVQHQNN (335 aa)) form a condensation 5 region.

This sequence belongs to the NRP synthetase family.

The protein operates within secondary metabolite biosynthesis. Its function is as follows. Nonribosomal peptide synthetase; part of the gene cluster that mediates the biosynthesis of malformins, cyclic pentapeptides with a disulfide bond between 2 consecutive cysteins, that show potential anti-tumor as well as antimalarial and antitrypanosomal properties. The nonribosomal peptide synthetase mlfA is responsible of the formation of the cyclic pentapeptide. The malformin biosynthesis clusters in malformin-producing fungi also contain enzymes involved in the formation of the disulfide bond between the two consecutive cysteins within malformins, in addition to additional tailoring enzymes such as methyltransferases or oxidoreductases. They are also composed of up to 4 major facilitator superfamily transporters, and transcription factors probably involved in the regulation of the expression of those clusters. The protein is Malformin synthetase mlfA of Aspergillus tubingensis (strain CBS 134.48).